Here is a 235-residue protein sequence, read N- to C-terminus: Calcium-activated potassium channel subunit beta-2 (235 aa).

The interval 1 to 45 (MFIWTSGRTSSSYRHDEKRNIYQKIRDHDLLDKRKTVTALKAGED) is ball and chain. Over 1–46 (MFIWTSGRTSSSYRHDEKRNIYQKIRDHDLLDKRKTVTALKAGEDR) the chain is Cytoplasmic. A helical transmembrane segment spans residues 47 to 67 (AILLGLAMMVCSIMMYFLLGI). Topologically, residues 68-194 (TLLRSYMQSV…VILTKLYSSN (127 aa)) are extracellular. N-linked (GlcNAc...) asparagine glycans are attached at residues Asn-88, Asn-96, and Asn-119. The helical transmembrane segment at 195 to 215 (VLFHSLFWPTCMMAGGVAIVA) threads the bilayer. Over 216–235 (MVKLTQYLSLLCERIQRINR) the chain is Cytoplasmic.

Belongs to the KCNMB (TC 8.A.14.1) family. KCNMB2 subfamily. Interacts with KCNMA1 tetramer. There are probably 4 molecules of KCMNB2 per KCNMA1 tetramer. In terms of processing, N-glycosylated. In terms of tissue distribution, highly expressed in brain and heart. Also expressed in lung.

It localises to the membrane. In terms of biological role, regulatory subunit of the calcium activated potassium KCNMA1 (maxiK) channel. Modulates the calcium sensitivity and gating kinetics of KCNMA1, thereby contributing to KCNMA1 channel diversity. Acts as a negative regulator that confers rapid and complete inactivation of KCNMA1 channel complex. The sequence is that of Calcium-activated potassium channel subunit beta-2 (Kcnmb2) from Rattus norvegicus (Rat).